A 355-amino-acid chain; its full sequence is U5 small nuclear ribonucleoprotein 40 kDa protein (355 aa).

WD repeat units lie at residues 60–99 (GHKGEIYSCKFNSYGTALASGGSDKEIFLWNVYGECINYS), 103–142 (GHKGTILELHWSTDSNEIYTACTDKSIGVWDSNKGELIKR), 145–185 (EHSG…STHL), 187–226 (QHKYPVTSVCFSDASDQLITGGIDNVIRVWDIRNQEDPLY), 230–269 (SHQDTITSTSVSKDGAYLLSNSMDNSCKIWDIRPYAPPNR), 280–319 (NFEKNLIKSSWSIDGRRIGCGSSDRQVYIWDTNTKQLQYC), and 322–355 (GHSGTVNEVTFHPNEPIIASCSSDKTIYLGEIKP).

As to quaternary structure, component of the pre-catalytic and catalytic spliceosome complexes. Component of the postcatalytic spliceosome P complex. Part of the U5 snRNP complex. Component of the U4/U6-U5 tri-snRNP complex.

It is found in the nucleus. In terms of biological role, required for pre-mRNA splicing as component of the activated spliceosome. Component of the U5 small nuclear ribonucleoprotein (snRNP) complex and the U4/U6-U5 tri-snRNP complex, building blocks of the spliceosome. This is U5 small nuclear ribonucleoprotein 40 kDa protein (snrnp40) from Dictyostelium discoideum (Social amoeba).